Reading from the N-terminus, the 49-residue chain is Large ribosomal subunit protein bL33 (49 aa).

The protein belongs to the bacterial ribosomal protein bL33 family.

This chain is Large ribosomal subunit protein bL33, found in Syntrophobacter fumaroxidans (strain DSM 10017 / MPOB).